Here is a 141-residue protein sequence, read N- to C-terminus: Hemoglobin subunit alpha-A (141 aa).

The region spanning V1–R141 is the Globin domain. H58 is a binding site for O2. Heme b is bound at residue H87.

It belongs to the globin family. Heterotetramer of two alpha chains and two beta chains. As to expression, red blood cells.

Involved in oxygen transport from the lung to the various peripheral tissues. In Eudynamys scolopaceus (Western koel), this protein is Hemoglobin subunit alpha-A (HBAA).